Reading from the N-terminus, the 120-residue chain is C-type natriuretic peptide 4 (120 aa).

The N-terminal stretch at 1 to 22 (MNLSYLVACGLMITLLSVRMGA) is a signal peptide. The propeptide occupies 23-96 (KPLSQAQQKS…PRRHKTGIKK (74 aa)). The cysteines at positions 104 and 120 are disulfide-linked.

This sequence belongs to the natriuretic peptide family.

The protein localises to the secreted. In terms of biological role, exhibits natriuretic and vasodepressant activity. Has cGMP-stimulating activity. May help to regulate body fluid homeostasis in a variety of aquatic environments. The polypeptide is C-type natriuretic peptide 4 (Takifugu rubripes (Japanese pufferfish)).